The primary structure comprises 500 residues: Monocarboxylate transporter 1 (500 aa).

The Cytoplasmic segment spans residues 1–22; the sequence is MPPAVGGPVGYTPPDGGWGWAV. A helical transmembrane segment spans residues 23 to 44; it reads VIGAFISIGFSYAFPKSITVFF. Position 38 (lysine 38) interacts with (S)-lactate. Over 45 to 55 the chain is Extracellular; that stretch reads KEIEGIFHATT. Residues 56–80 form a helical membrane-spanning segment; sequence SEVSWISSIMLAVMYGGGPISSILV. Residues 81-84 are Cytoplasmic-facing; sequence NKYG. The chain crosses the membrane as a helical span at residues 85 to 105; it reads SRIVMIVGGCLSGCGLIAASF. Topologically, residues 106-109 are extracellular; that stretch reads CNTV. The helical transmembrane segment at 110-132 threads the bilayer; it reads QQLYVCIGVIGGLGLAFNLNPAL. The Cytoplasmic portion of the chain corresponds to 133–146; sequence TMIGKYFYKRRPLA. A helical membrane pass occupies residues 147–169; it reads NGLAMAGSPVFLCTLAPLNQVFF. Residues 170–174 are Extracellular-facing; it reads GIFGW. A helical transmembrane segment spans residues 175-194; that stretch reads RGSFLILGGLLLNCCVAGAL. Over 195–261 the chain is Cytoplasmic; the sequence is MRPIGPKPTK…FLDLTLFTHR (67 aa). A phosphoserine mark is found at serine 210 and serine 213. Position 231 is a phosphothreonine (threonine 231). Residues 262–288 traverse the membrane as a helical segment; sequence GFLLYLSGNVIMFFGLFAPLVFLSSYG. Topologically, residues 289–295 are extracellular; it reads KSQHYSS. The chain crosses the membrane as a helical span at residues 296–317; it reads EKSAFLLSILAFVDMVARPSMG. Aspartate 309 is a binding site for H(+). Arginine 313 contributes to the (S)-lactate binding site. At 318–328 the chain is on the cytoplasmic side; sequence LVANTKPIRPR. The chain crosses the membrane as a helical span at residues 329–349; sequence IQYFFAASVVANGVCHMLAPL. Residues 350 to 353 are Extracellular-facing; sequence STTY. The chain crosses the membrane as a helical span at residues 354-375; that stretch reads VGFCVYAGFFGFAFGWLSSVLF. The Cytoplasmic segment spans residues 376–389; it reads ETLMDLVGPQRFSS. A helical membrane pass occupies residues 390-410; the sequence is AVGLVTIVECCPVLLGPPLLG. The Extracellular portion of the chain corresponds to 411-421; the sequence is RLNDMYGDYKY. Residues 422 to 443 form a helical membrane-spanning segment; sequence TYWACGVVLIISGIYLFIGMGI. Residues 444–500 are Cytoplasmic-facing; that stretch reads NYRLLAKEQKANEQKKESKEEETSIDVAGKPNEVTKAAESPDQKDTDGGPKEEESPV. Residues 454 to 465 show a composition bias toward basic and acidic residues; the sequence is ANEQKKESKEEE. The disordered stretch occupies residues 454–500; that stretch reads ANEQKKESKEEETSIDVAGKPNEVTKAAESPDQKDTDGGPKEEESPV. The residue at position 461 (serine 461) is a Phosphoserine. Threonine 466 carries the phosphothreonine modification. Serine 467, serine 483, and serine 498 each carry phosphoserine. Residues 482–500 are compositionally biased toward basic and acidic residues; that stretch reads ESPDQKDTDGGPKEEESPV.

This sequence belongs to the major facilitator superfamily. Monocarboxylate porter (TC 2.A.1.13) family. Interacts with EMB; interaction mediates SLC16A1 targeting to the plasma membrane. Interacts with isoform 2 of BSG; interaction mediates SLC16A1 targeting to the plasma membrane. In terms of tissue distribution, widely expressed. Detected in heart and in blood lymphocytes and monocytes (at protein level).

It localises to the cell membrane. Its subcellular location is the basolateral cell membrane. The protein localises to the apical cell membrane. The catalysed reaction is (S)-lactate(in) + H(+)(in) = (S)-lactate(out) + H(+)(out). It catalyses the reaction acetate(out) + H(+)(out) = acetate(in) + H(+)(in). It carries out the reaction acetoacetate(out) + H(+)(out) = acetoacetate(in) + H(+)(in). The enzyme catalyses pyruvate(out) + H(+)(out) = pyruvate(in) + H(+)(in). The catalysed reaction is (R)-3-hydroxybutanoate(out) + H(+)(out) = (R)-3-hydroxybutanoate(in) + H(+)(in). It catalyses the reaction 3-methyl-2-oxobutanoate(out) + H(+)(out) = 3-methyl-2-oxobutanoate(in) + H(+)(in). It carries out the reaction 4-methyl-2-oxopentanoate(out) + H(+)(out) = 4-methyl-2-oxopentanoate(in) + H(+)(in). The enzyme catalyses succinate(in) + 2 H(+)(in) = succinate(out) + 2 H(+)(out). Its activity is regulated as follows. Selectively inhibited by AZD3965, that acts as a competitive inhibitor binding to the central channel in the outward open conformation. In terms of biological role, bidirectional proton-coupled monocarboxylate transporter. Catalyzes the rapid transport across the plasma membrane of many monocarboxylates such as lactate, pyruvate, acetate and the ketone bodies acetoacetate and beta-hydroxybutyrate, and thus contributes to the maintenance of intracellular pH. The transport direction is determined by the proton motive force and the concentration gradient of the substrate monocarboxylate. MCT1 is a major lactate exporter. Plays a role in cellular responses to a high-fat diet by modulating the cellular levels of lactate and pyruvate that contribute to the regulation of central metabolic pathways and insulin secretion, with concomitant effects on plasma insulin levels and blood glucose homeostasis. Facilitates the protonated monocarboxylate form of succinate export, that its transient protonation upon muscle cell acidification in exercising muscle and ischemic heart. Functions via alternate outward- and inward-open conformation states. Protonation and deprotonation of 309-Asp is essential for the conformational transition. In Homo sapiens (Human), this protein is Monocarboxylate transporter 1.